The following is a 116-amino-acid chain: Vesicle-associated membrane protein 5 (116 aa).

Topologically, residues 1–72 (MAGKELERCQ…RWENARCRIY (72 aa)) are cytoplasmic. In terms of domain architecture, v-SNARE coiled-coil homology spans 5–65 (ELERCQRQAD…KTLAQKKRWE (61 aa)). Residues Ser-41, Ser-48, and Ser-49 each carry the phosphoserine modification. A helical; Anchor for type IV membrane protein transmembrane segment spans residues 73–93 (MGLAVGIALLILLIVLLVIFL). Residues 94–116 (PQSSKGSSAPQVQDAGPASGPGE) lie on the Vesicular side of the membrane. The interval 97–116 (SKGSSAPQVQDAGPASGPGE) is disordered.

Belongs to the synaptobrevin family.

It is found in the cell membrane. Its subcellular location is the endomembrane system. The protein resides in the golgi apparatus. The protein localises to the trans-Golgi network membrane. Its function is as follows. May participate in trafficking events that are associated with myogenesis, such as myoblast fusion and/or GLUT4 trafficking. This chain is Vesicle-associated membrane protein 5 (VAMP5), found in Bos taurus (Bovine).